Reading from the N-terminus, the 365-residue chain is D-alanine--D-alanine ligase (365 aa).

One can recognise an ATP-grasp domain in the interval 140 to 346 (KKILRRHGLQ…YSQLLTDLIY (207 aa)). 173–228 (EKQLSYPIFVKPANLGSSVGISKVKNREELIQGIDLAVKYDMKCLAEEFIPGKEIE) serves as a coordination point for ATP. 3 residues coordinate Mg(2+): Asp-299, Glu-313, and Asn-315.

It belongs to the D-alanine--D-alanine ligase family. Mg(2+) is required as a cofactor. It depends on Mn(2+) as a cofactor.

Its subcellular location is the cytoplasm. The enzyme catalyses 2 D-alanine + ATP = D-alanyl-D-alanine + ADP + phosphate + H(+). Its pathway is cell wall biogenesis; peptidoglycan biosynthesis. In terms of biological role, cell wall formation. The protein is D-alanine--D-alanine ligase of Natranaerobius thermophilus (strain ATCC BAA-1301 / DSM 18059 / JW/NM-WN-LF).